The sequence spans 461 residues: Asparagine--tRNA ligase (461 aa).

This sequence belongs to the class-II aminoacyl-tRNA synthetase family. In terms of assembly, homodimer.

Its subcellular location is the cytoplasm. The enzyme catalyses tRNA(Asn) + L-asparagine + ATP = L-asparaginyl-tRNA(Asn) + AMP + diphosphate + H(+). The polypeptide is Asparagine--tRNA ligase (Geobacter sulfurreducens (strain ATCC 51573 / DSM 12127 / PCA)).